Here is a 153-residue protein sequence, read N- to C-terminus: Endoribonuclease YbeY (153 aa).

Positions 119, 123, and 129 each coordinate Zn(2+).

It belongs to the endoribonuclease YbeY family. Zn(2+) is required as a cofactor.

The protein localises to the cytoplasm. Single strand-specific metallo-endoribonuclease involved in late-stage 70S ribosome quality control and in maturation of the 3' terminus of the 16S rRNA. This Desulforamulus reducens (strain ATCC BAA-1160 / DSM 100696 / MI-1) (Desulfotomaculum reducens) protein is Endoribonuclease YbeY.